The following is a 69-amino-acid chain: Mu-conotoxin-like Am3.1 (69 aa).

A signal peptide spans 1–20; sequence MMSKLRVLLIICLLLFPLTA. The propeptide occupies 21 to 52; the sequence is VPLDGDQPADRPAERTQDDISSEHHPMFDAVR. Residues 22 to 43 form a disordered region; the sequence is PLDGDQPADRPAERTQDDISSE. The span at 28 to 43 shows a compositional bias: basic and acidic residues; the sequence is PADRPAERTQDDISSE. Pro66 is subject to 4-hydroxyproline; partial; in minor form. Cys68 bears the Cysteine amide mark.

It belongs to the conotoxin M family. Post-translationally, mostly non-hydroxylated. In terms of processing, contains 3 disulfide bonds. As to expression, expressed by the venom duct.

The protein localises to the secreted. Its function is as follows. Mu-conotoxins block voltage-gated sodium channels (Nav). The sequence is that of Mu-conotoxin-like Am3.1 from Conus amadis (Amadis cone).